Here is a 111-residue protein sequence, read N- to C-terminus: uncharacterized protein (111 aa).

Residues 12-34 are disordered; sequence AWCPSRPPASAPSAPQEAARRGD. The segment at 71–76 is required for interaction with PPP3CA; sequence PNIIIT. Phosphothreonine occurs at positions 79 and 81.

In terms of assembly, interacts (via PxIxIT motif, when phosphorylated on Thr-79) with PPP3CA.

This is an uncharacterized protein from Mus musculus (Mouse).